The following is a 582-amino-acid chain: Vesicular glutamate transporter 2 (582 aa).

The Cytoplasmic segment spans residues 1 to 71 (MESVKQRILA…CTCFGLPRRY (71 aa)). Residues 72-92 (IIAIMSGLGFCISFGIRCNLG) form a helical membrane-spanning segment. The Vesicular portion of the chain corresponds to 93–125 (VAIVDMVNNSTIHRGGKVIKEKAKFNWDPETVG). N-linked (GlcNAc...) asparagine glycosylation is found at Asn-100 and Asn-101. Residues 126-146 (MIHGSFFWGYIITQIPGGYIA) traverse the membrane as a helical segment. Over 147-148 (SR) the chain is Cytoplasmic. The chain crosses the membrane as a helical span at residues 149–169 (LAANRVFGAAILLTSTLNMLI). At 170–177 (PSAARVHY) the chain is on the vesicular side. The helical transmembrane segment at 178–198 (GCVIFVRILQGLVEGVTYPAC) threads the bilayer. Residues 199–216 (HGIWSKWAPPLERSRLAT) are Cytoplasmic-facing. The helical transmembrane segment at 217–237 (TSFCGSYAGAVIAMPLAGILV) threads the bilayer. The Vesicular portion of the chain corresponds to 238–244 (QYTGWSS). A helical membrane pass occupies residues 245 to 265 (VFYVYGSFGMVWYMFWLLVSY). Residues 266–310 (ESPAKHPTITDEERRYIEESIGESANLLGAMEKFKTPWRKFFTSM) are Cytoplasmic-facing. Residues 311–331 (PVYAIIVANFCRSWTFYLLLI) traverse the membrane as a helical segment. The Vesicular portion of the chain corresponds to 332–349 (SQPAYFEEVFGFEISKVG). A helical membrane pass occupies residues 350–370 (MLSAVPHLVMTIIVPIGGQIA). Residues 371–386 (DFLRSKQILSTTTVRK) lie on the Cytoplasmic side of the membrane. Residues 387 to 407 (IMNCGGFGMEATLLLVVGYSH) traverse the membrane as a helical segment. The Vesicular segment spans residues 408–409 (TR). Residues 410–430 (GVAISFLVLAVGFSGFAISGF) form a helical membrane-spanning segment. Residues 431–443 (NVNHLDIAPRYAS) lie on the Cytoplasmic side of the membrane. A helical transmembrane segment spans residues 444-464 (ILMGISNGVGTLSGMVCPIIV). The Vesicular portion of the chain corresponds to 465 to 477 (GAMTKNKSREEWQ). Asn-470 is a glycosylation site (N-linked (GlcNAc...) asparagine). Residues 478–498 (YVFLIAALVHYGGVIFYAIFA) form a helical membrane-spanning segment. Residues 499–582 (SGEKQPWADP…HSYKDRVDYS (84 aa)) lie on the Cytoplasmic side of the membrane.

It belongs to the major facilitator superfamily. Sodium/anion cotransporter family. VGLUT subfamily. In terms of tissue distribution, predominantly expressed in adult brain. Expressed in amygdala, caudate nucleus, cerebral cortex, frontal lobe, hippocampus, medulla, occipital lobe, putamen, spinal cord, substantia nigra, subthalamic nucleus, temporal lobe and thalamus.

Its subcellular location is the cytoplasmic vesicle. The protein localises to the secretory vesicle. The protein resides in the synaptic vesicle membrane. It localises to the synapse. It is found in the synaptosome. Its subcellular location is the cell membrane. The catalysed reaction is L-glutamate(out) = L-glutamate(in). It carries out the reaction 3 Na(+)(out) + phosphate(out) = 3 Na(+)(in) + phosphate(in). It catalyses the reaction phosphate(in) = phosphate(out). The enzyme catalyses K(+)(in) + H(+)(out) = K(+)(out) + H(+)(in). The catalysed reaction is chloride(in) = chloride(out). Its activity is regulated as follows. Chloride channel activity is allosterically activated by lumenal H(+) and Cl(-) leading to synaptic vesicles acidification. The L-glutamate transport activity is allosterically activated by lumenal H(+) and Cl(-). The allosteric requirement for H(+) efficiently prevents non-vesicular efflux across the plasma membrane. The L-glutamate uniporter activity exhibits a biphasic dependence on chloride concentration. Multifunctional transporter that transports L-glutamate as well as multiple ions such as chloride, proton, potassium, sodium and phosphate. At the synaptic vesicle membrane, mainly functions as a uniporter which transports preferentially L-glutamate but also, phosphate from the cytoplasm into synaptic vesicles at presynaptic nerve terminals of excitatory neural cells. The L-glutamate or phosphate uniporter activity is electrogenic and is driven by the proton electrochemical gradient, mainly by the electrical gradient established by the vacuolar H(+)-ATPase across the synaptic vesicle membrane. In addition, functions as a chloride channel that allows the chloride permeation through the synaptic vesicle membrane therefore affects the proton electrochemical gradient and promotes synaptic vesicles acidification. Moreover, functions as a vesicular K(+)/H(+) antiport allowing to maintain the electrical gradient and to decrease chemical gradient and therefore sustain vesicular glutamate uptake. The vesicular H(+)/H(+) antiport activity is electroneutral. At the plasma membrane, following exocytosis, functions as a symporter of Na(+) and phosphate from the extracellular space to the cytoplasm allowing synaptic phosphate homeostasis regulation. The symporter activity is driven by an inside negative membrane potential and is electrogenic. Also involved in the regulation of retinal hyaloid vessel regression during postnatal development. May also play a role in the endocrine glutamatergic system of other tissues such as pineal gland and pancreas. This is Vesicular glutamate transporter 2 from Homo sapiens (Human).